Reading from the N-terminus, the 807-residue chain is Glycerol-3-phosphate acyltransferase (807 aa).

Positions 308 to 313 match the HXXXXD motif motif; that stretch reads CHRSHM.

Belongs to the GPAT/DAPAT family.

The protein localises to the cell inner membrane. It catalyses the reaction sn-glycerol 3-phosphate + an acyl-CoA = a 1-acyl-sn-glycero-3-phosphate + CoA. Its pathway is phospholipid metabolism; CDP-diacylglycerol biosynthesis; CDP-diacylglycerol from sn-glycerol 3-phosphate: step 1/3. The polypeptide is Glycerol-3-phosphate acyltransferase (Shewanella halifaxensis (strain HAW-EB4)).